The sequence spans 156 residues: ATP synthase subunit b (156 aa).

The helical transmembrane segment at 7–27 (FFAQMVVFFILWWVVAKFIWP) threads the bilayer.

Belongs to the ATPase B chain family. F-type ATPases have 2 components, F(1) - the catalytic core - and F(0) - the membrane proton channel. F(1) has five subunits: alpha(3), beta(3), gamma(1), delta(1), epsilon(1). F(0) has three main subunits: a(1), b(2) and c(10-14). The alpha and beta chains form an alternating ring which encloses part of the gamma chain. F(1) is attached to F(0) by a central stalk formed by the gamma and epsilon chains, while a peripheral stalk is formed by the delta and b chains.

The protein localises to the cell inner membrane. Its function is as follows. F(1)F(0) ATP synthase produces ATP from ADP in the presence of a proton or sodium gradient. F-type ATPases consist of two structural domains, F(1) containing the extramembraneous catalytic core and F(0) containing the membrane proton channel, linked together by a central stalk and a peripheral stalk. During catalysis, ATP synthesis in the catalytic domain of F(1) is coupled via a rotary mechanism of the central stalk subunits to proton translocation. In terms of biological role, component of the F(0) channel, it forms part of the peripheral stalk, linking F(1) to F(0). This Cupriavidus metallidurans (strain ATCC 43123 / DSM 2839 / NBRC 102507 / CH34) (Ralstonia metallidurans) protein is ATP synthase subunit b.